The sequence spans 549 residues: Dihydroxy-acid dehydratase (549 aa).

Mg(2+) is bound at residue aspartate 78. Cysteine 119 serves as a coordination point for [2Fe-2S] cluster. The Mg(2+) site is built by aspartate 120 and lysine 121. Position 121 is an N6-carboxylysine (lysine 121). Cysteine 191 is a binding site for [2Fe-2S] cluster. A Mg(2+)-binding site is contributed by glutamate 441. Serine 466 acts as the Proton acceptor in catalysis.

Belongs to the IlvD/Edd family. In terms of assembly, homodimer. [2Fe-2S] cluster is required as a cofactor. The cofactor is Mg(2+).

The catalysed reaction is (2R)-2,3-dihydroxy-3-methylbutanoate = 3-methyl-2-oxobutanoate + H2O. It carries out the reaction (2R,3R)-2,3-dihydroxy-3-methylpentanoate = (S)-3-methyl-2-oxopentanoate + H2O. It participates in amino-acid biosynthesis; L-isoleucine biosynthesis; L-isoleucine from 2-oxobutanoate: step 3/4. It functions in the pathway amino-acid biosynthesis; L-valine biosynthesis; L-valine from pyruvate: step 3/4. In terms of biological role, functions in the biosynthesis of branched-chain amino acids. Catalyzes the dehydration of (2R,3R)-2,3-dihydroxy-3-methylpentanoate (2,3-dihydroxy-3-methylvalerate) into 2-oxo-3-methylpentanoate (2-oxo-3-methylvalerate) and of (2R)-2,3-dihydroxy-3-methylbutanoate (2,3-dihydroxyisovalerate) into 2-oxo-3-methylbutanoate (2-oxoisovalerate), the penultimate precursor to L-isoleucine and L-valine, respectively. The sequence is that of Dihydroxy-acid dehydratase from Methanosphaera stadtmanae (strain ATCC 43021 / DSM 3091 / JCM 11832 / MCB-3).